The sequence spans 292 residues: Ribosomal RNA small subunit methyltransferase I (292 aa).

It belongs to the methyltransferase superfamily. RsmI family.

It is found in the cytoplasm. It catalyses the reaction cytidine(1402) in 16S rRNA + S-adenosyl-L-methionine = 2'-O-methylcytidine(1402) in 16S rRNA + S-adenosyl-L-homocysteine + H(+). Functionally, catalyzes the 2'-O-methylation of the ribose of cytidine 1402 (C1402) in 16S rRNA. The chain is Ribosomal RNA small subunit methyltransferase I from Buchnera aphidicola subsp. Baizongia pistaciae (strain Bp).